A 505-amino-acid polypeptide reads, in one-letter code: N-succinylglutamate 5-semialdehyde dehydrogenase (505 aa).

234 to 239 (GSAHTG) lines the NAD(+) pocket. Residues Glu-257 and Cys-291 contribute to the active site.

This sequence belongs to the aldehyde dehydrogenase family. AstD subfamily.

It catalyses the reaction N-succinyl-L-glutamate 5-semialdehyde + NAD(+) + H2O = N-succinyl-L-glutamate + NADH + 2 H(+). It functions in the pathway amino-acid degradation; L-arginine degradation via AST pathway; L-glutamate and succinate from L-arginine: step 4/5. Its function is as follows. Catalyzes the NAD-dependent reduction of succinylglutamate semialdehyde into succinylglutamate. The protein is N-succinylglutamate 5-semialdehyde dehydrogenase of Yersinia pestis bv. Antiqua (strain Antiqua).